Reading from the N-terminus, the 111-residue chain is Universal stress protein B (111 aa).

The next 2 membrane-spanning stretches (helical) occupy residues 1–21 (MISTVALFWALCVVCVINMAR) and 90–110 (FILTSALCGLVMVSLVGLILW).

It belongs to the universal stress protein B family.

The protein localises to the cell inner membrane. The chain is Universal stress protein B from Yersinia enterocolitica serotype O:8 / biotype 1B (strain NCTC 13174 / 8081).